The following is a 366-amino-acid chain: Anhydro-N-acetylmuramic acid kinase (366 aa).

12–19 (GTSLDGID) is a binding site for ATP.

It belongs to the anhydro-N-acetylmuramic acid kinase family.

It catalyses the reaction 1,6-anhydro-N-acetyl-beta-muramate + ATP + H2O = N-acetyl-D-muramate 6-phosphate + ADP + H(+). The protein operates within amino-sugar metabolism; 1,6-anhydro-N-acetylmuramate degradation. It functions in the pathway cell wall biogenesis; peptidoglycan recycling. Its function is as follows. Catalyzes the specific phosphorylation of 1,6-anhydro-N-acetylmuramic acid (anhMurNAc) with the simultaneous cleavage of the 1,6-anhydro ring, generating MurNAc-6-P. Is required for the utilization of anhMurNAc either imported from the medium or derived from its own cell wall murein, and thus plays a role in cell wall recycling. This is Anhydro-N-acetylmuramic acid kinase from Nitrosospira multiformis (strain ATCC 25196 / NCIMB 11849 / C 71).